The sequence spans 371 residues: Glutamate 5-kinase (371 aa).

Lysine 14 is an ATP binding site. Substrate-binding residues include serine 52, aspartate 139, and asparagine 151. 171-172 (SD) is a binding site for ATP. The PUA domain occupies 275–353 (EGRLHLDSGA…ADLAMELGPS (79 aa)).

The protein belongs to the glutamate 5-kinase family.

It is found in the cytoplasm. The catalysed reaction is L-glutamate + ATP = L-glutamyl 5-phosphate + ADP. Its pathway is amino-acid biosynthesis; L-proline biosynthesis; L-glutamate 5-semialdehyde from L-glutamate: step 1/2. Catalyzes the transfer of a phosphate group to glutamate to form L-glutamate 5-phosphate. In Frankia casuarinae (strain DSM 45818 / CECT 9043 / HFP020203 / CcI3), this protein is Glutamate 5-kinase.